The chain runs to 605 residues: Capsid scaffolding protein (605 aa).

Catalysis depends on charge relay system residues His48, Ser116, and His139. The segment at 235 to 274 (ASDAPDLQKPDKALQSPPPASTDPATMLSGNAGEGATACG) is disordered. The interval 281-300 (QDLISVPRNTFMTLLQTNLD) is interaction with pAP. Disordered regions lie at residues 403 to 431 (DYVP…FPGE) and 489 to 588 (PHQS…KSVS). The short motif at 410–416 (RSNKRKR) is the Nuclear localization signal element. Positions 568-579 (ASASGVAQSKEP) are enriched in polar residues. The interval 585 to 605 (KSVSAHLKSIFCEELLNKRVA) is interaction with major capsid protein.

It belongs to the herpesviridae capsid scaffolding protein family. In terms of assembly, homomultimer. Interacts with major capsid protein. As to quaternary structure, exists in a monomer-dimer equilibrium with the dimer being the active species. In terms of processing, capsid scaffolding protein is cleaved by assemblin after formation of the spherical procapsid. As a result, the capsid obtains its mature, icosahedral shape. Cleavages occur at two or more sites: release (R-site) and maturation (M-site).

Its subcellular location is the host cytoplasm. It localises to the host nucleus. It catalyses the reaction Cleaves -Ala-|-Ser- and -Ala-|-Ala- bonds in the scaffold protein.. In terms of biological role, acts as a scaffold protein by binding major capsid protein in the cytoplasm, inducing the nuclear localization of both proteins. Multimerizes in the nucleus such as major capsid protein forms the icosahedral T=16 capsid. Autocatalytic cleavage releases the assembly protein, and subsequently abolishes interaction with major capsid protein. Cleavages products are evicted from the capsid before or during DNA packaging. Functionally, protease that plays an essential role in virion assembly within the nucleus. Catalyzes the cleavage of the assembly protein after formation of the spherical procapsid. By that cleavage, the capsid matures and gains its icosahedral shape. The cleavage sites seem to include -Ala-Ser-, -Ala-Ala-, as well as Ala-Thr bonds. Assemblin and cleavages products are evicted from the capsid before or during DNA packaging. Plays a major role in capsid assembly. Acts as a scaffold protein by binding major capsid protein. Multimerizes in the nucleus such as major capsid protein forms the icosahedral T=16 capsid. Cleaved by assemblin after capsid completion. The cleavages products are evicted from the capsid before or during DNA packaging. The polypeptide is Capsid scaffolding protein (Homo sapiens (Human)).